A 76-amino-acid polypeptide reads, in one-letter code: Omega-conotoxin-like TxO3 (76 aa).

Positions 1-22 (MKLTCVVIVAVLFLTAWTFVTA) are cleaved as a signal peptide. A propeptide spanning residues 23 to 52 (VPHSSNALENLYLKAHHEMNNPEASELNKR) is cleaved from the precursor. Intrachain disulfides connect C53/C67, C60/C71, and C66/C75.

This sequence belongs to the conotoxin O1 superfamily. Expressed by the venom duct.

It is found in the secreted. Omega-conotoxins act at presynaptic membranes, they bind and block voltage-gated calcium channels (Cav). The sequence is that of Omega-conotoxin-like TxO3 (TXO3) from Conus textile (Cloth-of-gold cone).